The primary structure comprises 432 residues: UDP-N-acetylglucosamine 1-carboxyvinyltransferase (432 aa).

22–23 contacts phosphoenolpyruvate; it reads KN. Arg96 is a UDP-N-acetyl-alpha-D-glucosamine binding site. Cys120 acts as the Proton donor in catalysis. Cys120 carries the post-translational modification 2-(S-cysteinyl)pyruvic acid O-phosphothioketal. UDP-N-acetyl-alpha-D-glucosamine contacts are provided by residues 125–129, Asp310, and Ile332; that span reads RPVDL.

This sequence belongs to the EPSP synthase family. MurA subfamily.

It is found in the cytoplasm. The enzyme catalyses phosphoenolpyruvate + UDP-N-acetyl-alpha-D-glucosamine = UDP-N-acetyl-3-O-(1-carboxyvinyl)-alpha-D-glucosamine + phosphate. It functions in the pathway cell wall biogenesis; peptidoglycan biosynthesis. Functionally, cell wall formation. Adds enolpyruvyl to UDP-N-acetylglucosamine. The protein is UDP-N-acetylglucosamine 1-carboxyvinyltransferase of Caulobacter sp. (strain K31).